The sequence spans 830 residues: P-selectin (830 aa).

Residues 1 to 41 (MANCQIAILYQRFQRVVFGISQLLCFSALISELTNQKEVAA) form the signal peptide. Topologically, residues 42–771 (WTYHYSTKAY…QAGPLTIQEA (730 aa)) are extracellular. N-linked (GlcNAc...) asparagine glycans are attached at residues N54 and N98. Residues 58–158 (KYCQNRYTDL…HCLKKKHALC (101 aa)) enclose the C-type lectin domain. 23 disulfide bridges follow: C60-C158, C131-C150, C163-C174, C168-C183, C185-C194, C200-C244, C230-C257, C262-C306, C292-C319, C324-C368, C354-C381, C386-C430, C416-C443, C448-C492, C478-C505, C510-C554, C540-C567, C572-C616, C602-C629, C642-C686, C672-C699, C704-C748, and C734-C761. Positions 121, 123, and 124 each coordinate Ca(2+). N123 is a binding site for a carbohydrate. Residues E133 and N146 each contribute to the a carbohydrate site. Ca(2+) contacts are provided by N146 and D147. In terms of domain architecture, EGF-like spans 159–195 (YTASCQDMSCSKQGECLETIGNYTCSCYPGFYGPECE). N-linked (GlcNAc...) asparagine glycosylation is present at N180. 9 Sushi domains span residues 198–259 (RECG…QCLA), 260–321 (AQCP…VCKA), 322–383 (VQCQ…TCEA), 384–445 (ISCE…VCQA), 446–507 (LQCQ…ECQA), 508–569 (IPCT…MCEA), 570–631 (IKCP…TCKG), 640–701 (VQCP…ACRA), and 702–763 (VKCS…TCQA). Residues N212 and N219 are each glycosylated (N-linked (GlcNAc...) asparagine). A glycan (N-linked (GlcNAc...) asparagine) is linked at N411. The N-linked (GlcNAc...) asparagine glycan is linked to N460. An N-linked (GlcNAc...) asparagine glycan is attached at N518. Residue N665 is glycosylated (N-linked (GlcNAc...) asparagine). 3 N-linked (GlcNAc...) asparagine glycosylation sites follow: N716, N723, and N741. Residues 772-795 (LTYFGGAVASTIGLIMGGTLLALL) traverse the membrane as a helical segment. Topologically, residues 796 to 830 (RKRFRQKDDGKCPLNPHSHLGTYGVFTNAAFDPSP) are cytoplasmic. C807 carries S-palmitoyl cysteine; alternate lipidation. The S-stearoyl cysteine; alternate moiety is linked to residue C807. An Endocytosis signal motif is present at residues 818–821 (YGVF). Residues 821–830 (FTNAAFDPSP) form an interaction with SNX17 region.

This sequence belongs to the selectin/LECAM family. In terms of assembly, interacts with SNX17. Interacts with SELPLG/PSGL1 and PODXL2 and mediates neutrophil adhesion and leukocyte rolling. This interaction requires the sialyl-Lewis X epitope of SELPLG and PODXL2, and specific tyrosine sulfation on SELPLG. Interacts (via C-type lectin domain) with alpha-IIb/beta3 integrin ITGA2B:ITGB3 and alpha-V/beta-3 integrin ITGAV:ITGB3. Interacts with alpha5/beta1 integrin ITGA5:ITGB1 and alpha4/beta1 integrin ITGA4:ITGB. Stored in the alpha-granules of platelets and Weibel-Palade bodies of endothelial cells. Upon cell activation by agonists, P-selectin is transported rapidly to the cell surface.

It is found in the cell membrane. In terms of biological role, ca(2+)-dependent receptor for myeloid cells that binds to carbohydrates on neutrophils and monocytes. Mediates the interaction of activated endothelial cells or platelets with leukocytes. The ligand recognized is sialyl-Lewis X. Mediates rapid rolling of leukocyte rolling over vascular surfaces during the initial steps in inflammation through interaction with SELPLG. Mediates cell-cell interactions and cell adhesion via the interaction with integrin alpha-IIb/beta3 (ITGA2B:ITGB3) and integrin alpha-V/beta-3 (ITGAV:ITGB3). The sequence is that of P-selectin (SELP) from Homo sapiens (Human).